The following is a 706-amino-acid chain: Elongation factor G (706 aa).

In terms of domain architecture, tr-type G spans 8–290 (NRYRNIGICA…AVIDYLPAPT (283 aa)). GTP-binding positions include 17 to 24 (AHVDAGKT), 88 to 92 (DTPGH), and 142 to 145 (NKMD).

The protein belongs to the TRAFAC class translation factor GTPase superfamily. Classic translation factor GTPase family. EF-G/EF-2 subfamily.

It localises to the cytoplasm. Its function is as follows. Catalyzes the GTP-dependent ribosomal translocation step during translation elongation. During this step, the ribosome changes from the pre-translocational (PRE) to the post-translocational (POST) state as the newly formed A-site-bound peptidyl-tRNA and P-site-bound deacylated tRNA move to the P and E sites, respectively. Catalyzes the coordinated movement of the two tRNA molecules, the mRNA and conformational changes in the ribosome. This Stutzerimonas stutzeri (strain A1501) (Pseudomonas stutzeri) protein is Elongation factor G.